We begin with the raw amino-acid sequence, 289 residues long: tRNA pseudouridine synthase B (289 aa).

Aspartate 38 (nucleophile) is an active-site residue.

It belongs to the pseudouridine synthase TruB family. Type 1 subfamily.

The catalysed reaction is uridine(55) in tRNA = pseudouridine(55) in tRNA. Functionally, responsible for synthesis of pseudouridine from uracil-55 in the psi GC loop of transfer RNAs. The protein is tRNA pseudouridine synthase B of Clostridium kluyveri (strain ATCC 8527 / DSM 555 / NBRC 12016 / NCIMB 10680 / K1).